The sequence spans 414 residues: Putative transporter AmpG 4 (414 aa).

12 helical membrane passes run 15–35 (IFILGIVSGMPLVIIFSTLSV), 44–63 (IAVITTFAVARLSYSLKVFW), 84–104 (WLILCSSLMVLVLIAMSKENP), 109–129 (TSLYFLTIALGFLSSTFDIAV), 150–170 (VFGYRIGMLITGAGALYLAEI), 177–197 (LTFVIIAIIFAVATIFIITVN), 230–250 (FAVTILLAVIFFKLGDAMLGA), 268–288 (IIAKLYGLIATLVGGFAGGIV), 295–315 (FKGLIITGIAQSLTHFAFIWL), 324–344 (ALLIAITIENFAAAMGATALV), 360–379 (YALLSSSSSLCNNTVTIYAG), and 389–409 (GFFIFTIILALPALFILMYLN).

This sequence belongs to the major facilitator superfamily.

The protein localises to the cell inner membrane. This is Putative transporter AmpG 4 (ampG4) from Rickettsia felis (strain ATCC VR-1525 / URRWXCal2) (Rickettsia azadi).